Reading from the N-terminus, the 178-residue chain is Acireductone dioxygenase (178 aa).

Residues H82, H84, E88, and H127 each coordinate Fe(2+). 4 residues coordinate Ni(2+): H82, H84, E88, and H127. S157 carries the post-translational modification Phosphoserine.

Belongs to the acireductone dioxygenase (ARD) family. Fe(2+) is required as a cofactor. Ni(2+) serves as cofactor.

The protein localises to the cytoplasm. Its subcellular location is the nucleus. The catalysed reaction is 1,2-dihydroxy-5-(methylsulfanyl)pent-1-en-3-one + O2 = 4-methylsulfanyl-2-oxobutanoate + formate + 2 H(+). It catalyses the reaction 1,2-dihydroxy-5-(methylsulfanyl)pent-1-en-3-one + O2 = 3-(methylsulfanyl)propanoate + CO + formate + 2 H(+). It functions in the pathway amino-acid biosynthesis; L-methionine biosynthesis via salvage pathway; L-methionine from S-methyl-5-thio-alpha-D-ribose 1-phosphate: step 5/6. Functionally, catalyzes 2 different reactions between oxygen and the acireductone 1,2-dihydroxy-3-keto-5-methylthiopentene (DHK-MTPene) depending upon the metal bound in the active site. Fe-containing acireductone dioxygenase (Fe-ARD) produces formate and 2-keto-4-methylthiobutyrate (KMTB), the alpha-ketoacid precursor of methionine in the methionine recycle pathway. Ni-containing acireductone dioxygenase (Ni-ARD) produces methylthiopropionate, carbon monoxide and formate, and does not lie on the methionine recycle pathway. The sequence is that of Acireductone dioxygenase (adi1) from Schizosaccharomyces pombe (strain 972 / ATCC 24843) (Fission yeast).